Reading from the N-terminus, the 70-residue chain is Conotoxin Lt11.2 (70 aa).

Positions 1–26 are cleaved as a signal peptide; the sequence is MMFRLTSVSCFLLFIVFLNLVVLTNA. 4 disulfides stabilise this stretch: Cys27–Cys41, Cys34–Cys46, Cys40–Cys50, and Cys45–Cys54. The residue at position 57 (Pro57) is a Proline amide. The propeptide occupies 61 to 70; the sequence is EKLQEFFRQR.

It belongs to the conotoxin I2 superfamily. In terms of tissue distribution, expressed by the venom duct.

It localises to the secreted. The polypeptide is Conotoxin Lt11.2 (Conus litteratus (Lettered cone)).